We begin with the raw amino-acid sequence, 316 residues long: MLKVLFHTMTLFGHLLSTPIYIVGDACGKDRDEYKNPPLRAFSFESQFLQIENAKFKTLPDQSLRYRQADTSLFATIPVTEMSGFLLSSRYLGAEVSWKSSKELQDTDLQAVGYFAFQDKSFYQYITLSVGAYTLALTNWQWSVLFSGMVDPENIEIGSGLYQVVLSSKYHASESLSVIMGVINEVGLHDKQAWPLLGFSYKPEDRLTLNCIYPVNFSAEYQCTPVCDLGVAYRLTRLRKKFPKNSLATSEGIFEYSGREIEGNIKLIFWPGQSLKMFGGYSVGNDISLANAHNEDEKIYKFGSSLFFGASANLHF.

It belongs to the chlamydial CPn_0441/CT_007/TC_0275 family.

This is an uncharacterized protein from Chlamydia trachomatis serovar D (strain ATCC VR-885 / DSM 19411 / UW-3/Cx).